The chain runs to 331 residues: Phenylalanine--tRNA ligase alpha subunit (331 aa).

Glu-252 contributes to the Mg(2+) binding site.

The protein belongs to the class-II aminoacyl-tRNA synthetase family. Phe-tRNA synthetase alpha subunit type 1 subfamily. In terms of assembly, tetramer of two alpha and two beta subunits. Requires Mg(2+) as cofactor.

Its subcellular location is the cytoplasm. The enzyme catalyses tRNA(Phe) + L-phenylalanine + ATP = L-phenylalanyl-tRNA(Phe) + AMP + diphosphate + H(+). This chain is Phenylalanine--tRNA ligase alpha subunit, found in Hahella chejuensis (strain KCTC 2396).